An 883-amino-acid polypeptide reads, in one-letter code: Phosphoenolpyruvate carboxylase (883 aa).

Active-site residues include His-138 and Lys-546.

Belongs to the PEPCase type 1 family. Requires Mg(2+) as cofactor.

The enzyme catalyses oxaloacetate + phosphate = phosphoenolpyruvate + hydrogencarbonate. Forms oxaloacetate, a four-carbon dicarboxylic acid source for the tricarboxylic acid cycle. In Escherichia fergusonii (strain ATCC 35469 / DSM 13698 / CCUG 18766 / IAM 14443 / JCM 21226 / LMG 7866 / NBRC 102419 / NCTC 12128 / CDC 0568-73), this protein is Phosphoenolpyruvate carboxylase.